We begin with the raw amino-acid sequence, 203 residues long: MEDLTEKQSLVFEFIMEYTADHGYPPTVRELCDELGFKSPNTAHFHLKGLKDKGYIQSAKGKNRGITVLKTPPGAGGKIPLVGRIAAGAPILAVENVMDTLDVDRAFFGSSDAFSVRVEGDSMIEAHIEDGDYVVIKPTATPRNGDIVAALVNDEVTLKYFHRDGSRIELRPANVRYKPFCYTEEDFIDVRVLGVMAGLIRKV.

The segment at residues 28–48 (VRELCDELGFKSPNTAHFHLK) is a DNA-binding region (H-T-H motif). Residues serine 122 and lysine 159 each act as for autocatalytic cleavage activity in the active site.

It belongs to the peptidase S24 family. As to quaternary structure, homodimer.

The catalysed reaction is Hydrolysis of Ala-|-Gly bond in repressor LexA.. Functionally, represses a number of genes involved in the response to DNA damage (SOS response), including recA and lexA. In the presence of single-stranded DNA, RecA interacts with LexA causing an autocatalytic cleavage which disrupts the DNA-binding part of LexA, leading to derepression of the SOS regulon and eventually DNA repair. The polypeptide is LexA repressor (Desulfatibacillum aliphaticivorans).